Consider the following 265-residue polypeptide: Cytochrome c oxidase subunit 3 (265 aa).

The next 6 membrane-spanning stretches (helical) occupy residues 41-61, 85-105, 137-157, 162-182, 200-220, and 245-265; these read GGATLLSLGLIFILYTMFVWW, GFILFIVSEVMFFFAFFWAFF, TLILLSSGAAVTWAHHAILAG, AVYALVATVLLALVFTGFQGM, FFLATGFHGFHVIIGTLFLIV, and WHFVDVVWLFLFVSIYWWGGI.

This sequence belongs to the cytochrome c oxidase subunit 3 family. In terms of assembly, component of the cytochrome c oxidase (complex IV, CIV), a multisubunit enzyme composed of a catalytic core of 3 subunits and several supernumerary subunits. The complex exists as a monomer or a dimer and forms supercomplexes (SCs) in the inner mitochondrial membrane with ubiquinol-cytochrome c oxidoreductase (cytochrome b-c1 complex, complex III, CIII).

It localises to the mitochondrion inner membrane. It catalyses the reaction 4 Fe(II)-[cytochrome c] + O2 + 8 H(+)(in) = 4 Fe(III)-[cytochrome c] + 2 H2O + 4 H(+)(out). Component of the cytochrome c oxidase, the last enzyme in the mitochondrial electron transport chain which drives oxidative phosphorylation. The respiratory chain contains 3 multisubunit complexes succinate dehydrogenase (complex II, CII), ubiquinol-cytochrome c oxidoreductase (cytochrome b-c1 complex, complex III, CIII) and cytochrome c oxidase (complex IV, CIV), that cooperate to transfer electrons derived from NADH and succinate to molecular oxygen, creating an electrochemical gradient over the inner membrane that drives transmembrane transport and the ATP synthase. Cytochrome c oxidase is the component of the respiratory chain that catalyzes the reduction of oxygen to water. Electrons originating from reduced cytochrome c in the intermembrane space (IMS) are transferred via the dinuclear copper A center (CU(A)) of subunit 2 and heme A of subunit 1 to the active site in subunit 1, a binuclear center (BNC) formed by heme A3 and copper B (CU(B)). The BNC reduces molecular oxygen to 2 water molecules using 4 electrons from cytochrome c in the IMS and 4 protons from the mitochondrial matrix. The protein is Cytochrome c oxidase subunit 3 (COX3) of Triticum aestivum (Wheat).